Consider the following 234-residue polypeptide: Mitochondrial assembly of ribosomal large subunit protein 1 (234 aa).

The interval 63-88 (SEPGLEERAEGTVNEGRPESDAADHT) is disordered.

The protein belongs to the Iojap/RsfS family. As to quaternary structure, associates with the mitochondrial ribosome large subunit (39S) via interaction with MRPL12 and/or MRPL14. The interaction generates steric hindrance that is expected to prevent premature association of the 28S and 39S ribosomal subunits. Interacts with intermediates of the mitochondrial ribosome large subunit (mt-LSU) (recruits the mitochondrial ribosome and complex I assembly factor AltMIEF1 and NDUFAB1); regulates mitochondrial ribosomes assembly. Interacts with MRPL12 and MRPL14.

It is found in the mitochondrion matrix. Its function is as follows. Required for normal mitochondrial ribosome function and mitochondrial translation. May play a role in ribosome biogenesis by preventing premature association of the 28S and 39S ribosomal subunits. Interacts with mitochondrial ribosomal protein uL14m (MRPL14), probably blocking formation of intersubunit bridge B8, preventing association of the 28S and 39S ribosomal subunits. Addition to isolated mitochondrial ribosomal subunits partially inhibits translation, probably by interfering with the association of the 28S and 39S ribosomal subunits and the formation of functional ribosomes. May also participate in the assembly and/or regulation of the stability of the large subunit of the mitochondrial ribosome. May function as a ribosomal silencing factor. The polypeptide is Mitochondrial assembly of ribosomal large subunit protein 1 (MALSU1) (Homo sapiens (Human)).